A 500-amino-acid chain; its full sequence is Anthranilate synthase component 1 (500 aa).

L-tryptophan-binding positions include Ser49 and 276-278 (PFM). 311 to 312 (GT) contributes to the chorismate binding site. Residue Glu338 participates in Mg(2+) binding. Chorismate-binding positions include Tyr426, Arg446, 460-462 (GGG), and Gly462. Glu475 contacts Mg(2+).

Belongs to the anthranilate synthase component I family. As to quaternary structure, heterotetramer consisting of two non-identical subunits: a beta subunit (TrpG) and a large alpha subunit (TrpE). Requires Mg(2+) as cofactor.

It catalyses the reaction chorismate + L-glutamine = anthranilate + pyruvate + L-glutamate + H(+). It participates in amino-acid biosynthesis; L-tryptophan biosynthesis; L-tryptophan from chorismate: step 1/5. Its activity is regulated as follows. Feedback inhibited by tryptophan. Part of a heterotetrameric complex that catalyzes the two-step biosynthesis of anthranilate, an intermediate in the biosynthesis of L-tryptophan. In the first step, the glutamine-binding beta subunit (TrpG) of anthranilate synthase (AS) provides the glutamine amidotransferase activity which generates ammonia as a substrate that, along with chorismate, is used in the second step, catalyzed by the large alpha subunit of AS (TrpE) to produce anthranilate. In the absence of TrpG, TrpE can synthesize anthranilate directly from chorismate and high concentrations of ammonia. The polypeptide is Anthranilate synthase component 1 (trpE) (Cereibacter sphaeroides (strain ATCC 17023 / DSM 158 / JCM 6121 / CCUG 31486 / LMG 2827 / NBRC 12203 / NCIMB 8253 / ATH 2.4.1.) (Rhodobacter sphaeroides)).